The following is a 603-amino-acid chain: Elongation factor 4 (603 aa).

In terms of domain architecture, tr-type G spans 9 to 191; the sequence is SNIRNFSIIA…RIVRQIPPPK (183 aa). Residues 21-26 and 138-141 each bind GTP; these read DHGKST and NKID.

It belongs to the TRAFAC class translation factor GTPase superfamily. Classic translation factor GTPase family. LepA subfamily.

Its subcellular location is the cell inner membrane. It catalyses the reaction GTP + H2O = GDP + phosphate + H(+). Required for accurate and efficient protein synthesis under certain stress conditions. May act as a fidelity factor of the translation reaction, by catalyzing a one-codon backward translocation of tRNAs on improperly translocated ribosomes. Back-translocation proceeds from a post-translocation (POST) complex to a pre-translocation (PRE) complex, thus giving elongation factor G a second chance to translocate the tRNAs correctly. Binds to ribosomes in a GTP-dependent manner. This is Elongation factor 4 from Idiomarina loihiensis (strain ATCC BAA-735 / DSM 15497 / L2-TR).